The sequence spans 431 residues: Glucose-1-phosphate adenylyltransferase (431 aa).

Beta-D-fructose 1,6-bisphosphate is bound at residue Lys-39. The AMP site is built by Arg-40, His-46, and Arg-52. Tyr-114 provides a ligand contact to alpha-D-glucose 1-phosphate. Arg-130 contributes to the AMP binding site. Residues Gly-179, 194 to 195 (EK), and Ser-212 each bind alpha-D-glucose 1-phosphate. Glu-370 and Arg-386 together coordinate AMP. Beta-D-fructose 1,6-bisphosphate is bound by residues 419-423 (REMLR) and 429-431 (QER).

This sequence belongs to the bacterial/plant glucose-1-phosphate adenylyltransferase family. Homotetramer.

It catalyses the reaction alpha-D-glucose 1-phosphate + ATP + H(+) = ADP-alpha-D-glucose + diphosphate. It functions in the pathway glycan biosynthesis; glycogen biosynthesis. Its activity is regulated as follows. Allosterically activated by fructose-1,6-bisphosphate (F16BP) and inhibited by AMP. In terms of biological role, involved in the biosynthesis of ADP-glucose, a building block required for the elongation reactions to produce glycogen. Catalyzes the reaction between ATP and alpha-D-glucose 1-phosphate (G1P) to produce pyrophosphate and ADP-Glc. This is Glucose-1-phosphate adenylyltransferase from Salmonella dublin (strain CT_02021853).